Here is a 436-residue protein sequence, read N- to C-terminus: GTPase Der (436 aa).

EngA-type G domains follow at residues 4–167 (PTVA…PVEE) and 175–351 (IRFS…ESQN). Residues 10 to 17 (GRPNVGKS), 57 to 61 (DTGGI), 119 to 122 (NKVD), 181 to 188 (GRPNVGKS), 229 to 233 (DTAGM), and 294 to 297 (NKWD) contribute to the GTP site. A KH-like domain is found at 352 to 436 (KRIPSAVLND…PINLIARKRK (85 aa)).

It belongs to the TRAFAC class TrmE-Era-EngA-EngB-Septin-like GTPase superfamily. EngA (Der) GTPase family. In terms of assembly, associates with the 50S ribosomal subunit.

Its function is as follows. GTPase that plays an essential role in the late steps of ribosome biogenesis. The protein is GTPase Der of Streptococcus agalactiae serotype III (strain NEM316).